A 908-amino-acid chain; its full sequence is 3-phosphoinositide-dependent protein kinase B (908 aa).

Composition is skewed to low complexity over residues 53–170, 179–189, and 200–216; these read NNNF…SSSL, YSDSSDSIDSY, and QQQQHLQQQQDQPQPLH. The tract at residues 53–267 is disordered; sequence NNNFNNNNNN…PNSSIPHKKS (215 aa). The span at 250–262 shows a compositional bias: polar residues; sequence KTSSFGLQPNSSI. The Protein kinase domain occupies 271-527; that stretch reads FDFIRTIGKG…ISEIKNHEFF (257 aa). Residues 281-283 and Lys300 each bind ATP; that span reads AYG. Residues 302–346 are PIF-pocket; that stretch reads LNKKLIIKEKKAKYVNTEKTILDSLDNPNIVKLFYTFQDENNLYF. ATP-binding positions include 349-351 and Asp355; that span reads EYC. The Proton acceptor role is filled by Asp394. 2 residues coordinate ATP: Glu398 and Asp412. 2 disordered regions span residues 538–560 and 606–755; these read SQTPPPIEQMVPQSPFPSPNSSL and ISNN…KNLQ. Residues 607-684 show a composition bias toward low complexity; the sequence is SNNNNNNNNT…PAYSSTPSST (78 aa). Polar residues predominate over residues 696-709; the sequence is SSCSSNNLLGKSSN. Residues 710-741 show a composition bias toward low complexity; it reads QQYQPFQFHQQQQQQQQQQQRERSSTTTPSPT. The PH domain maps to 764–902; it reads SSFSTSSPMS…KLWVDLINEL (139 aa).

It belongs to the protein kinase superfamily. AGC Ser/Thr protein kinase family. PDPK1 subfamily.

It catalyses the reaction L-seryl-[protein] + ATP = O-phospho-L-seryl-[protein] + ADP + H(+). It carries out the reaction L-threonyl-[protein] + ATP = O-phospho-L-threonyl-[protein] + ADP + H(+). This Dictyostelium discoideum (Social amoeba) protein is 3-phosphoinositide-dependent protein kinase B (pdkB).